We begin with the raw amino-acid sequence, 428 residues long: Inward rectifier potassium channel 2 (428 aa).

The Cytoplasmic segment spans residues 1-81 (MGSVRTNRYS…IFTTCVDIRW (81 aa)). Cys76 is modified (S-nitrosocysteine). The chain crosses the membrane as a helical span at residues 82-106 (RWMLVIFCLAFVLSWLFFGCVFWLI). The Extracellular portion of the chain corresponds to 107–128 (ALLHGDLDTSKVSKACVSEVNS). Positions 129–140 (FTAAFLFSIETQ) form an intramembrane region, helical; Pore-forming. Residues 141–147 (TTIGYGF) constitute an intramembrane region (pore-forming). Residues 142–147 (TIGYGF) carry the Selectivity filter motif. Topologically, residues 148 to 156 (RCVTDECPI) are extracellular. Residues 157–178 (AVFMVVFQSIVGCIIDAFIIGA) traverse the membrane as a helical segment. The Cytoplasmic portion of the chain corresponds to 179-428 (VMAKMAKPKK…PRPLRRESEI (250 aa)). Residues 181–208 (AKMAKPKKRNETLVFSHNAVIAMRDGKL) are polyphosphoinositide (PIP2)-binding. Residues 383–428 (TSKEEEEDSENGVPESTSTDSPPGIDLHNQASVPLEPRPLRRESEI) form a disordered region. The PDZ-binding motif lies at 426 to 428 (SEI).

This sequence belongs to the inward rectifier-type potassium channel (TC 1.A.2.1) family. KCNJ2 subfamily. Homotetramer. Homomultimeric and heteromultimeric association with KCNJ4/Kir2.3. Can form heteromeric channels with Kir2.6/KCNJ18. Associates, via its PDZ-recognition domain, with a complex containing LIN7A, LIN7B, LIN7C, DLG1, CASK and APBA1. In terms of processing, S-nitrosylation increases the open probability and inward rectifying currents. In terms of tissue distribution, prominently expressed in the central nervous system. Also found in other excitable tissues such as heart and skeletal muscle.

Its subcellular location is the cell membrane. It localises to the sarcolemma. The protein localises to the T-tubule. It catalyses the reaction K(+)(in) = K(+)(out). Activated by phosphatidylinositol 4,5 biphosphate (PtdIns(4,5)P2). In terms of biological role, inward rectifier potassium channels are characterized by a greater tendency to allow potassium to flow into the cell rather than out of it. Their voltage dependence is regulated by the concentration of extracellular potassium; as external potassium is raised, the voltage range of the channel opening shifts to more positive voltages. The inward rectification is mainly due to the blockage of outward current by internal magnesium. Can be blocked by extracellular barium and cesium. Probably participates in establishing action potential waveform and excitability of neuronal and muscle tissues. The polypeptide is Inward rectifier potassium channel 2 (Kcnj2) (Mus musculus (Mouse)).